Here is a 125-residue protein sequence, read N- to C-terminus: ATP synthase epsilon chain (125 aa).

This sequence belongs to the ATPase epsilon chain family. As to quaternary structure, F-type ATPases have 2 components, CF(1) - the catalytic core - and CF(0) - the membrane proton channel. CF(1) has five subunits: alpha(3), beta(3), gamma(1), delta(1), epsilon(1). CF(0) has three main subunits: a, b and c.

It localises to the cell inner membrane. Functionally, produces ATP from ADP in the presence of a proton gradient across the membrane. The polypeptide is ATP synthase epsilon chain (Aliarcobacter butzleri (strain RM4018) (Arcobacter butzleri)).